The sequence spans 169 residues: MSNDTFYLKREKRFLVLLGIICLSLIGGALYMQIALGEAPCPLCILQRYALLFIAIFAFIGAAMNGRRGVTVFEALVTLSALCGIAAAGRHAWILAHPSDSCGIDILQPIVDGLPLATLFPTGFQVSGFCTTPYPPVLGLSLAQWALTAFVLTAILVPACIIRNRRKPY.

The Cytoplasmic portion of the chain corresponds to M1 to F14. Residues L15–Y31 traverse the membrane as a helical segment. Residues M32–Y49 are Periplasmic-facing. Cysteines 41 and 44 form a disulfide. The chain crosses the membrane as a helical span at residues A50–M64. The Cytoplasmic portion of the chain corresponds to N65–T71. A helical transmembrane segment spans residues V72–G89. Over R90–Q144 the chain is Periplasmic. C102 and C130 are oxidised to a cystine. A helical membrane pass occupies residues W145–R163. The Cytoplasmic portion of the chain corresponds to N164 to Y169.

The protein belongs to the DsbB family.

It localises to the cell inner membrane. Its function is as follows. Required for disulfide bond formation in some periplasmic proteins. Acts by oxidizing the DsbA protein. This Pseudomonas syringae pv. tomato (strain ATCC BAA-871 / DC3000) protein is Disulfide bond formation protein B.